Reading from the N-terminus, the 113-residue chain is Phosphoribosyl-ATP pyrophosphatase (113 aa).

It belongs to the PRA-PH family.

It is found in the cytoplasm. The catalysed reaction is 1-(5-phospho-beta-D-ribosyl)-ATP + H2O = 1-(5-phospho-beta-D-ribosyl)-5'-AMP + diphosphate + H(+). It functions in the pathway amino-acid biosynthesis; L-histidine biosynthesis; L-histidine from 5-phospho-alpha-D-ribose 1-diphosphate: step 2/9. In Hydrogenovibrio crunogenus (strain DSM 25203 / XCL-2) (Thiomicrospira crunogena), this protein is Phosphoribosyl-ATP pyrophosphatase.